A 113-amino-acid polypeptide reads, in one-letter code: Large ribosomal subunit protein bL17 (113 aa).

Belongs to the bacterial ribosomal protein bL17 family. As to quaternary structure, part of the 50S ribosomal subunit. Contacts protein L32.

In Clostridium novyi (strain NT), this protein is Large ribosomal subunit protein bL17.